The primary structure comprises 161 residues: Anaerobic nitrite reductase Glb1-1 (161 aa).

The Globin domain maps to cysteine 8–lysine 157. The Homodimerization signature appears at glutamate 41 to serine 45. The heme b site is built by serine 51, lysine 65, histidine 69, lysine 99, threonine 103, and histidine 104. The short motif at asparagine 111 to aspartate 123 is the Homodimerization element.

It belongs to the plant globin family. Homodimer. Requires heme b as cofactor. In terms of tissue distribution, mainly expressed in root nodules, and, to a lower extent, in leaves, roots, stems, flowers and fruits. Accumulates in mature root nodules.

The enzyme catalyses Fe(III)-heme b-[protein] + nitric oxide + H2O = Fe(II)-heme b-[protein] + nitrite + 2 H(+). Phytoglobin that reduces nitrite to nitric oxide (NO) under anoxic conditions (e.g. during flooding or in waterlogged soil) and upon root nodulation. Required for general plant development and during nodulation, especially for the onset of symbiosis. Monitors nitric oxide (NO) levels during early phase of the nitrogen-fixing symbiosis and buffers oxygen in functioning nodules. May not function as an oxygen storage or transport protein. Has an unusually high affinity for O(2) through a hexacoordinate heme iron because of a very low dissociation constant. The polypeptide is Anaerobic nitrite reductase Glb1-1 (Lotus japonicus (Lotus corniculatus var. japonicus)).